A 321-amino-acid chain; its full sequence is Glucokinase (321 aa).

8–13 lines the ATP pocket; that stretch reads GDVGGT.

This sequence belongs to the bacterial glucokinase family.

Its subcellular location is the cytoplasm. It catalyses the reaction D-glucose + ATP = D-glucose 6-phosphate + ADP + H(+). The sequence is that of Glucokinase from Salmonella choleraesuis (strain SC-B67).